A 295-amino-acid polypeptide reads, in one-letter code: Glycine--tRNA ligase alpha subunit (295 aa).

The protein belongs to the class-II aminoacyl-tRNA synthetase family. In terms of assembly, tetramer of two alpha and two beta subunits.

It is found in the cytoplasm. It carries out the reaction tRNA(Gly) + glycine + ATP = glycyl-tRNA(Gly) + AMP + diphosphate. The chain is Glycine--tRNA ligase alpha subunit from Desulforamulus reducens (strain ATCC BAA-1160 / DSM 100696 / MI-1) (Desulfotomaculum reducens).